The sequence spans 312 residues: Olfactory receptor 6C74 (312 aa).

The Extracellular segment spans residues 1–23 (MRNHTTVANFILLGLTDDPQLQV). Asn3 is a glycosylation site (N-linked (GlcNAc...) asparagine). The chain crosses the membrane as a helical span at residues 24 to 44 (IIFLLLFFTYMLSITGNLTII). Topologically, residues 45–63 (TLTLLDLHLKTPMYFFLRN) are cytoplasmic. A helical transmembrane segment spans residues 64–84 (FSFLEVSFTTVYIPKFLVSMA). Residues 85–95 (TGDKTISYNDC) are Extracellular-facing. Cys95 and Cys177 are oxidised to a cystine. Residues 96-116 (AAQLFFTILLGATEFFLLAAM) form a helical membrane-spanning segment. Over 117 to 140 (SYERYVAICKPLHYTTIMSSRVCS) the chain is Cytoplasmic. A helical transmembrane segment spans residues 141–161 (LLVFASWMAGFLIIFPPLLMG). Over 162 to 194 (LQLDFCAANTVDHFFCDVSPILQLSCTDTDIIE) the chain is Extracellular. Residues 195–215 (LMMLLSAILTLLVTLVLVILS) form a helical membrane-spanning segment. Over 216 to 237 (YTNIIRTILKIPSSQQRKKAFS) the chain is Cytoplasmic. A helical transmembrane segment spans residues 238–258 (TCSSHMVVVSISYGSCIFMYV). Topologically, residues 259–269 (KPSAKERVSLN) are extracellular. Residues 270–290 (KGIALLSTSVAPMLNPFIYTL) form a helical membrane-spanning segment. The Cytoplasmic portion of the chain corresponds to 291-312 (RNKQVKDVFKHTVKKIELFSMK).

This sequence belongs to the G-protein coupled receptor 1 family.

Its subcellular location is the cell membrane. Odorant receptor. The sequence is that of Olfactory receptor 6C74 (OR6C74) from Homo sapiens (Human).